The primary structure comprises 64 residues: Large ribosomal subunit protein bL35 (64 aa).

Disordered stretches follow at residues Met-1–Ile-22 and Glu-34–Gly-64. The span at Glu-34–Thr-48 shows a compositional bias: basic and acidic residues. Residues Val-50 to Gly-64 show a composition bias toward polar residues.

The protein belongs to the bacterial ribosomal protein bL35 family.

In Mycobacterium leprae (strain Br4923), this protein is Large ribosomal subunit protein bL35.